A 526-amino-acid chain; its full sequence is Peptide chain release factor 3 (526 aa).

A tr-type G domain is found at 8–277; the sequence is NKRRTFAIIS…GLTQWAPAPQ (270 aa). GTP is bound by residues 17–24, 85–89, and 139–142; these read SHPDAGKT, DTPGH, and NKLD.

It belongs to the TRAFAC class translation factor GTPase superfamily. Classic translation factor GTPase family. PrfC subfamily.

It localises to the cytoplasm. Functionally, increases the formation of ribosomal termination complexes and stimulates activities of RF-1 and RF-2. It binds guanine nucleotides and has strong preference for UGA stop codons. It may interact directly with the ribosome. The stimulation of RF-1 and RF-2 is significantly reduced by GTP and GDP, but not by GMP. This chain is Peptide chain release factor 3, found in Histophilus somni (strain 2336) (Haemophilus somnus).